The following is a 259-amino-acid chain: Protein unc-50 homolog (259 aa).

A compositionally biased stretch (polar residues) spans 1–15; sequence MLPTSSPQIHRNGSL. The tract at residues 1-22 is disordered; that stretch reads MLPTSSPQIHRNGSLSERDAAR. The Cytoplasmic segment spans residues 1-80; sequence MLPTSSPQIH…TKDQWARDDP (80 aa). A helical membrane pass occupies residues 81–101; the sequence is AFLVLLSIWLCVSTVGFGLVL. Topologically, residues 102–110 are lumenal; the sequence is DMGFVETLT. The helical transmembrane segment at 111–131 threads the bilayer; the sequence is LLLWVVFIDCIGVGLLISTLM. At 132–162 the chain is on the cytoplasmic side; it reads WFVTNKYLMKHPNRDYDVEWGYAFDVHLNAF. A helical transmembrane segment spans residues 163 to 183; that stretch reads YPLLVILHFLQLFFINHVVVI. Residues 184–198 lie on the Lumenal side of the membrane; it reads SSDWFLGYFVGNTMW. A helical transmembrane segment spans residues 199–219; it reads LIAIGYYVYITFLGYSALPFL. The Cytoplasmic portion of the chain corresponds to 220 to 222; the sequence is KNT. The chain crosses the membrane as a helical span at residues 223–243; sequence VVLLYPFALLGLLYVLSISLG. Residues 244-259 are Lumenal-facing; that stretch reads WNFTKGLCWFYKHRVQ.

This sequence belongs to the unc-50 family.

The protein localises to the nucleus inner membrane. It is found in the golgi apparatus membrane. Functionally, involved in the cell surface expression of neuronal nicotinic receptors. Binds RNA. This is Protein unc-50 homolog (unc50) from Danio rerio (Zebrafish).